The following is an 882-amino-acid chain: Translation initiation factor IF-2 (882 aa).

The tract at residues 50–299 (SFKSANTTKP…KERPLPETLV (250 aa)) is disordered. 2 stretches are compositionally biased toward basic and acidic residues: residues 60 to 71 (STEKDSKNSSRK) and 84 to 96 (RRRD…DNRH). Over residues 97–108 (GNNKRRNNKFKK) the composition is skewed to basic residues. Basic and acidic residues-rich tracts occupy residues 109-133 (QQND…DLLN), 169-183 (KKVE…EKLE), 232-242 (QKEETKPTRKK), and 250-263 (EVPD…EHSD). A compositionally biased stretch (basic residues) spans 264–277 (KARRRRNKKNKRIN). The segment covering 278-294 (QSKEIKKQPTQRKERPL) has biased composition (basic and acidic residues). The 170-residue stretch at 383–552 (KRPPVVTIMG…LLQADVMELK (170 aa)) folds into the tr-type G domain. Positions 392 to 399 (GHVDHGKT) are G1. Position 392–399 (392–399 (GHVDHGKT)) interacts with GTP. Positions 417–421 (GITQK) are G2. The G3 stretch occupies residues 438–441 (DTPG). GTP is bound by residues 438 to 442 (DTPGH) and 492 to 495 (NKID). The G4 stretch occupies residues 492 to 495 (NKID). Residues 528-530 (SAK) are G5.

The protein belongs to the TRAFAC class translation factor GTPase superfamily. Classic translation factor GTPase family. IF-2 subfamily.

The protein localises to the cytoplasm. In terms of biological role, one of the essential components for the initiation of protein synthesis. Protects formylmethionyl-tRNA from spontaneous hydrolysis and promotes its binding to the 30S ribosomal subunits. Also involved in the hydrolysis of GTP during the formation of the 70S ribosomal complex. The sequence is that of Translation initiation factor IF-2 from Lactobacillus gasseri (strain ATCC 33323 / DSM 20243 / BCRC 14619 / CIP 102991 / JCM 1131 / KCTC 3163 / NCIMB 11718 / NCTC 13722 / AM63).